Reading from the N-terminus, the 538-residue chain is Putative cysteine ligase BshC (538 aa).

A coiled-coil region spans residues 460 to 484 (KINEQIELLERMLKRNVEKKHEVEL).

It belongs to the BshC family.

Its function is as follows. Involved in bacillithiol (BSH) biosynthesis. May catalyze the last step of the pathway, the addition of cysteine to glucosamine malate (GlcN-Mal) to generate BSH. In Bacillus anthracis (strain A0248), this protein is Putative cysteine ligase BshC.